Consider the following 339-residue polypeptide: NADPH dehydrogenase (339 aa).

24-27 (SPMC) provides a ligand contact to FMN. Tyrosine 29 serves as a coordination point for substrate. FMN contacts are provided by alanine 61 and glutamine 103. A substrate-binding site is contributed by 165 to 168 (HGAH). Residues arginine 216 and 308–309 (AR) each bind FMN.

It belongs to the NADH:flavin oxidoreductase/NADH oxidase family. NamA subfamily. Homotetramer. Requires FMN as cofactor.

It catalyses the reaction A + NADPH + H(+) = AH2 + NADP(+). Its function is as follows. Catalyzes the reduction of the double bond of an array of alpha,beta-unsaturated aldehydes and ketones. It also reduces the nitro group of nitroester and nitroaromatic compounds. It could have a role in detoxification processes. The protein is NADPH dehydrogenase of Bacillus licheniformis (strain ATCC 14580 / DSM 13 / JCM 2505 / CCUG 7422 / NBRC 12200 / NCIMB 9375 / NCTC 10341 / NRRL NRS-1264 / Gibson 46).